A 343-amino-acid chain; its full sequence is Protein RecA (343 aa).

ATP is bound at residue 66–73 (GPESSGKT).

It belongs to the RecA family.

The protein localises to the cytoplasm. In terms of biological role, can catalyze the hydrolysis of ATP in the presence of single-stranded DNA, the ATP-dependent uptake of single-stranded DNA by duplex DNA, and the ATP-dependent hybridization of homologous single-stranded DNAs. It interacts with LexA causing its activation and leading to its autocatalytic cleavage. The polypeptide is Protein RecA (Rickettsia bellii (strain OSU 85-389)).